Consider the following 196-residue polypeptide: Probable nicotinate-nucleotide adenylyltransferase (196 aa).

It belongs to the NadD family.

It carries out the reaction nicotinate beta-D-ribonucleotide + ATP + H(+) = deamido-NAD(+) + diphosphate. It functions in the pathway cofactor biosynthesis; NAD(+) biosynthesis; deamido-NAD(+) from nicotinate D-ribonucleotide: step 1/1. In terms of biological role, catalyzes the reversible adenylation of nicotinate mononucleotide (NaMN) to nicotinic acid adenine dinucleotide (NaAD). The polypeptide is Probable nicotinate-nucleotide adenylyltransferase (Caldicellulosiruptor saccharolyticus (strain ATCC 43494 / DSM 8903 / Tp8T 6331)).